Consider the following 441-residue polypeptide: Xaa-Pro aminopeptidase (441 aa).

Residues Asp261, Asp272, His355, Glu384, and Glu407 each coordinate Mn(2+).

Belongs to the peptidase M24B family. Homotetramer. It depends on Mn(2+) as a cofactor.

The protein localises to the cytoplasm. The catalysed reaction is Release of any N-terminal amino acid, including proline, that is linked to proline, even from a dipeptide or tripeptide.. The chain is Xaa-Pro aminopeptidase (pepP) from Escherichia coli (strain K12).